We begin with the raw amino-acid sequence, 56 residues long: Small ribosomal subunit protein uS14 (56 aa).

Residues Cys21, Cys24, Cys39, and Cys42 each contribute to the Zn(2+) site.

It belongs to the universal ribosomal protein uS14 family. Zn(2+) serves as cofactor.

This Debaryomyces hansenii (strain ATCC 36239 / CBS 767 / BCRC 21394 / JCM 1990 / NBRC 0083 / IGC 2968) (Yeast) protein is Small ribosomal subunit protein uS14 (RPS29).